The chain runs to 360 residues: DNA replication and repair protein RecF (360 aa).

Residue 30–37 participates in ATP binding; that stretch reads GQNGSGKT.

Belongs to the RecF family.

The protein localises to the cytoplasm. Its function is as follows. The RecF protein is involved in DNA metabolism; it is required for DNA replication and normal SOS inducibility. RecF binds preferentially to single-stranded, linear DNA. It also seems to bind ATP. This chain is DNA replication and repair protein RecF, found in Shewanella baltica (strain OS155 / ATCC BAA-1091).